The following is a 301-amino-acid chain: Vomeronasal type-1 receptor 4 (301 aa).

Residues 1-5 (MASRY) lie on the Extracellular side of the membrane. The helical transmembrane segment at 6 to 26 (VAVGMILSQTVVGVLGSFSVL) threads the bilayer. Residues 27–48 (LHYLSFYCTGCRLRSTDLIVKH) lie on the Cytoplasmic side of the membrane. The chain crosses the membrane as a helical span at residues 49–69 (LIVANFLALRCKGVPQTMAAF). Topologically, residues 70–88 (GVRYFLNALGCKLVFYLHR) are extracellular. Residues 89–109 (VGRGVSIGTTCLLSVFQVITV) traverse the membrane as a helical segment. Topologically, residues 110-126 (SSRKSRWAKLKEKAPKH) are cytoplasmic. A helical transmembrane segment spans residues 127 to 147 (VGFSVLLCWIVCMLVNIIFPM). The Extracellular segment spans residues 148–185 (YVTGKWNYTNITVNEDLGYCSGGGNNKIAQTLRAMLLS). N-linked (GlcNAc...) asparagine glycosylation is found at Asn-154 and Asn-157. A helical transmembrane segment spans residues 186-206 (FPDVLCLGLMLWVSSSMVCIL). The Cytoplasmic segment spans residues 207–234 (HRHKQRVQHIDRSNLSPRASPENRATQS). Residues 235–255 (ILILVSTFVSSYTLSCLFQVC) form a helical membrane-spanning segment. Residues 256–264 (MALLDNPNS) lie on the Extracellular side of the membrane. The chain crosses the membrane as a helical span at residues 265–285 (LLVNTSALMSVCFPTLSPFVL). The Cytoplasmic segment spans residues 286–301 (MSCDPSVYRFCFAWKR).

This sequence belongs to the G-protein coupled receptor 1 family.

The protein localises to the cell membrane. Putative pheromone receptor. In Homo sapiens (Human), this protein is Vomeronasal type-1 receptor 4 (VN1R4).